The following is a 415-amino-acid chain: Maintenance of mitochondrial morphology protein 1 (415 aa).

The Lumenal segment spans residues 1-18 (MADICPSRSEPTLSFTQG). Residues 19 to 39 (LILGQLSVVLLLAAFIKFFIF) form a helical membrane-spanning segment. Residues 40 to 415 (GDPPSPEVVA…MPGSMPGSMP (376 aa)) lie on the Cytoplasmic side of the membrane. An SMP-LTD domain is found at 114–330 (QPESLDWFNV…EPRFQEIALP (217 aa)). A compositionally biased stretch (basic and acidic residues) spans 373 to 389 (IEAEAHGGADRVPDSLR). The tract at residues 373 to 415 (IEAEAHGGADRVPDSLRYRHRPRADEEFPGAGSMPGSMPGSMP) is disordered. Residues 404 to 415 (GSMPGSMPGSMP) show a composition bias toward low complexity.

Belongs to the MMM1 family. Homodimer. Component of the ER-mitochondria encounter structure (ERMES) or MDM complex, composed of mmm-1, mdm10, mdm12 and mdm34. A mmm-1 homodimer associates with one molecule of mdm12 on each side in a pairwise head-to-tail manner, and the SMP-LTD domains of mmm-1 and mdm12 generate a continuous hydrophobic tunnel for phospholipid trafficking.

Its subcellular location is the endoplasmic reticulum membrane. Component of the ERMES/MDM complex, which serves as a molecular tether to connect the endoplasmic reticulum (ER) and mitochondria. Components of this complex are involved in the control of mitochondrial shape and protein biogenesis, and function in nonvesicular lipid trafficking between the ER and mitochondria. The mdm12-mmm-1 subcomplex functions in the major beta-barrel assembly pathway that is responsible for biogenesis of all outer membrane beta-barrel proteins, and acts in a late step after the SAM complex. The mdm10-mdm12-mmm-1 subcomplex further acts in the TOM40-specific pathway after the action of the mdm12-mmm-1 complex. Essential for establishing and maintaining the structure of mitochondria and maintenance of mtDNA nucleoids. The sequence is that of Maintenance of mitochondrial morphology protein 1 (mmm-1) from Neurospora crassa (strain ATCC 24698 / 74-OR23-1A / CBS 708.71 / DSM 1257 / FGSC 987).